The sequence spans 1024 residues: Beta-galactosidase (1024 aa).

The substrate site is built by Asn103 and Asp202. Asp202 provides a ligand contact to Na(+). The Mg(2+) site is built by Glu417, His419, and Glu462. Substrate-binding positions include Glu462 and 538-541 (EYAH). Glu462 (proton donor) is an active-site residue. Glu538 serves as the catalytic Nucleophile. Asn598 lines the Mg(2+) pocket. 2 residues coordinate Na(+): Phe602 and Asn605. Asn605 and Trp1000 together coordinate substrate.

It belongs to the glycosyl hydrolase 2 family. In terms of assembly, homotetramer. It depends on Mg(2+) as a cofactor. The cofactor is Na(+).

The enzyme catalyses Hydrolysis of terminal non-reducing beta-D-galactose residues in beta-D-galactosides.. In Escherichia coli O157:H7, this protein is Beta-galactosidase.